The following is a 436-amino-acid chain: UDP-N-acetylmuramate--L-alanine ligase (436 aa).

111 to 117 (GTHGKTS) contacts ATP.

This sequence belongs to the MurCDEF family.

Its subcellular location is the cytoplasm. It carries out the reaction UDP-N-acetyl-alpha-D-muramate + L-alanine + ATP = UDP-N-acetyl-alpha-D-muramoyl-L-alanine + ADP + phosphate + H(+). It participates in cell wall biogenesis; peptidoglycan biosynthesis. Its function is as follows. Cell wall formation. The protein is UDP-N-acetylmuramate--L-alanine ligase of Pediococcus pentosaceus (strain ATCC 25745 / CCUG 21536 / LMG 10740 / 183-1w).